Reading from the N-terminus, the 118-residue chain is Small ribosomal subunit protein uS13 (118 aa).

Residues 94–118 (SLPLRGQRTKTNARTRKGPRKPIKK) form a disordered region.

This sequence belongs to the universal ribosomal protein uS13 family. As to quaternary structure, part of the 30S ribosomal subunit. Forms a loose heterodimer with protein S19. Forms two bridges to the 50S subunit in the 70S ribosome.

Located at the top of the head of the 30S subunit, it contacts several helices of the 16S rRNA. In the 70S ribosome it contacts the 23S rRNA (bridge B1a) and protein L5 of the 50S subunit (bridge B1b), connecting the 2 subunits; these bridges are implicated in subunit movement. Contacts the tRNAs in the A and P-sites. The protein is Small ribosomal subunit protein uS13 of Vibrio vulnificus (strain CMCP6).